The following is a 490-amino-acid chain: Phosphoethanolamine N-methyltransferase 3 (490 aa).

S-adenosyl-L-homocysteine contacts are provided by Gly-60, Arg-65, Asp-81, Asp-106, Val-107, and Asn-125. The phosphocholine site is built by Ser-158, Ser-163, Gly-164, Arg-168, and Tyr-175. N-methylethanolamine phosphate-binding positions include 244–245 (QY) and Tyr-253. Tyr-253 is a phosphocholine binding site. S-adenosyl-L-homocysteine contacts are provided by Val-262, Ser-263, Gly-289, Asp-311, Asp-337, Cys-338, and Arg-354. Phosphocholine contacts are provided by Tyr-385, Tyr-399, Arg-403, Tyr-405, and Lys-471. Residues Tyr-385, Tyr-399, 403–405 (RGY), and Lys-471 each bind N-methylethanolamine phosphate.

It belongs to the class I-like SAM-binding methyltransferase superfamily. PEAMT family. Expressed in root vasculature, shoots, rosettes leaves, cauline leaves, sepals, petals, anther filaments and ovules. Highly expressed in leaf vasculature.

It localises to the cytoplasm. The catalysed reaction is phosphoethanolamine + S-adenosyl-L-methionine = N-methylethanolamine phosphate + S-adenosyl-L-homocysteine + H(+). It catalyses the reaction N-methylethanolamine phosphate + S-adenosyl-L-methionine = N,N-dimethylethanolamine phosphate + S-adenosyl-L-homocysteine + H(+). The enzyme catalyses N,N-dimethylethanolamine phosphate + S-adenosyl-L-methionine = phosphocholine + S-adenosyl-L-homocysteine + H(+). It functions in the pathway phospholipid metabolism; phosphatidylcholine biosynthesis; phosphocholine from phosphoethanolamine: step 1/1. Its function is as follows. Involved in phosphocholine biosynthesis. Catalyzes the N-methylation of phosphoethanolamine, phosphomonomethylethanolamine and phosphodimethylethanolamine, the three methylation steps required to convert phosphoethanolamine to phosphocholine (PC). In association with NMT1, regulates PC homeostasis, phase transition at the shoot apex, coordinated organ development, and fertility. In associtation with NMT1, involved in phosphatidylcholine biosynthesis and vascular development. In Arabidopsis thaliana (Mouse-ear cress), this protein is Phosphoethanolamine N-methyltransferase 3.